The primary structure comprises 567 residues: Sporulation-specific protein 5 (567 aa).

Polar residues predominate over residues 1 to 18; sequence MNGIITPQKQKQLMSSPS. Disordered stretches follow at residues 1-39 and 52-76; these read MNGI…VDVN and ILLT…KKPN. Over residues 21–35 the composition is skewed to low complexity; sequence PLSTTELSTPTSQTT. Residues 56–66 are compositionally biased toward polar residues; that stretch reads PGTSPNATPGS. RRM domains are found at residues 296 to 380 and 384 to 462; these read RNVY…SLQD and TNLY…FADS.

It localises to the cytoplasm. Its function is as follows. RNA-binding protein which plays a role in sporulation. Regulates the progression of meiosis I and may function in the vicinity of the Mei2 dot. This chain is Sporulation-specific protein 5 (spo5), found in Schizosaccharomyces pombe (strain 972 / ATCC 24843) (Fission yeast).